Consider the following 279-residue polypeptide: RRP15-like protein (279 aa).

Disordered regions lie at residues Met1–Ala40, Gly56–Arg120, and Lys200–Asp279. Residues Lys73 to Phe83 are compositionally biased toward basic and acidic residues. Acidic residues-rich tracts occupy residues Lys93–Asp104 and Gln213–Ala224. Over residues Lys232–Thr245 the composition is skewed to basic and acidic residues. A compositionally biased stretch (acidic residues) spans Asp267–Asp279.

It belongs to the RRP15 family.

This Drosophila pseudoobscura pseudoobscura (Fruit fly) protein is RRP15-like protein.